Reading from the N-terminus, the 603-residue chain is Keratin, type II cuticular Hb4 (603 aa).

Residues 1–173 are head; it reads MSCRSYRVSS…PNAQRVKRDE (173 aa). The 312-residue stretch at 173–484 folds into the IF rod domain; it reads EKEQIKTLNN…RLLEGEEIRI (312 aa). The tract at residues 174–208 is coil 1A; it reads KEQIKTLNNKFASFIDKVRFLEQQNKLLETKWSFL. The tract at residues 209–218 is linker 1; it reads QEQKCARSNL. Positions 219-319 are coil 1B; the sequence is EPLFDNYITN…YHEEIEMLQS (101 aa). The interval 320-336 is linker 12; it reads HISETSVIVKMDNSRDL. The coil 2 stretch occupies residues 337–480; that stretch reads NLDGIIAEVK…VTYRRLLEGE (144 aa). The interval 481 to 603 is tail; sequence EIRICEGVGP…STTTSRRTRY (123 aa). Residues 579–603 form a disordered region; sequence CSGGRGNRSSSVRFSSTTTSRRTRY.

It belongs to the intermediate filament family. Heterotetramer of two type I and two type II keratins. In terms of tissue distribution, in skin, only expressed in the suprabasal cells of tail scale epidermis. Suprabasally expressed in stratified squamous epithelia and also in the posterior unit of the complex filiform papillae of tongue. Expressed in rare anatomical sites in which an orthokeratinized stratum corneum would be too soft and a hard keratinized structure would be too rigid to meet the functional requirement of the respective epithelia.

In Mus musculus (Mouse), this protein is Keratin, type II cuticular Hb4 (Krt84).